We begin with the raw amino-acid sequence, 287 residues long: ATP synthase gamma chain (287 aa).

Belongs to the ATPase gamma chain family. F-type ATPases have 2 components, CF(1) - the catalytic core - and CF(0) - the membrane proton channel. CF(1) has five subunits: alpha(3), beta(3), gamma(1), delta(1), epsilon(1). CF(0) has three main subunits: a, b and c.

Its subcellular location is the cell inner membrane. Produces ATP from ADP in the presence of a proton gradient across the membrane. The gamma chain is believed to be important in regulating ATPase activity and the flow of protons through the CF(0) complex. This Xanthomonas oryzae pv. oryzae (strain MAFF 311018) protein is ATP synthase gamma chain.